Here is a 36-residue protein sequence, read N- to C-terminus: APLEPVYPGDNATPEQMAQYAAEMRRYINMLTRPRY.

At Tyr36 the chain carries Tyrosine amide.

It belongs to the NPY family.

The protein resides in the secreted. In terms of biological role, hormone secreted by pancreatic cells that acts as a regulator of pancreatic and gastrointestinal functions probably by signaling through the G protein-coupled receptor NPY4R2. This Chinchilla chinchilla (Short-tailed chinchilla) protein is Pancreatic polypeptide (PPY).